Reading from the N-terminus, the 946-residue chain is Leucine--tRNA ligase (946 aa).

Positions 43 to 53 (PYPNGTIHIGH) match the 'HIGH' region motif. Residues 638–642 (KMSKS) carry the 'KMSKS' region motif. Position 641 (K641) interacts with ATP.

It belongs to the class-I aminoacyl-tRNA synthetase family.

The protein localises to the cytoplasm. It carries out the reaction tRNA(Leu) + L-leucine + ATP = L-leucyl-tRNA(Leu) + AMP + diphosphate. The sequence is that of Leucine--tRNA ligase from Pyrobaculum calidifontis (strain DSM 21063 / JCM 11548 / VA1).